A 255-amino-acid polypeptide reads, in one-letter code: Aliphatic sulfonates import ATP-binding protein SsuB (255 aa).

In terms of domain architecture, ABC transporter spans 12–233 (LLLNAVSKHY…RLGSVRLAEL (222 aa)). 44-51 (GRSGGGKS) is an ATP binding site.

It belongs to the ABC transporter superfamily. Aliphatic sulfonates importer (TC 3.A.1.17.2) family. In terms of assembly, the complex is composed of two ATP-binding proteins (SsuB), two transmembrane proteins (SsuC) and a solute-binding protein (SsuA).

The protein resides in the cell inner membrane. The catalysed reaction is ATP + H2O + aliphatic sulfonate-[sulfonate-binding protein]Side 1 = ADP + phosphate + aliphatic sulfonateSide 2 + [sulfonate-binding protein]Side 1.. Functionally, part of the ABC transporter complex SsuABC involved in aliphatic sulfonates import. Responsible for energy coupling to the transport system. This is Aliphatic sulfonates import ATP-binding protein SsuB from Escherichia coli (strain K12).